The following is a 3625-amino-acid chain: Spectinabilin polyketide synthase system protein NorA' (3625 aa).

Residues 33–459 form the Ketosynthase family 3 (KS3) 1 domain; sequence REPVAVVSMA…GTNAHVILEQ (427 aa). Active-site for beta-ketoacyl synthase 1 activity residues include cysteine 206, histidine 341, and histidine 381. In terms of domain architecture, Malonyl-CoA:ACP transacylase (MAT) 1 spans 564 to 881; that stretch reads LVFPGQGSQW…SLGELFAGGR (318 aa). Residues 930–1054 are N-terminal hotdog fold 1; that stretch reads HPWWGAVTEL…GTLTRTARPA (125 aa). The region spanning 930–1200 is the PKS/mFAS DH 1 domain; the sequence is HPWWGAVTEL…VRPLTPGSGA (271 aa). Residue histidine 962 is the Proton acceptor; for dehydratase activity 1 of the active site. The tract at residues 1066–1200 is C-terminal hotdog fold 1; the sequence is ADPLPVDRIY…VRPLTPGSGA (135 aa). Aspartate 1125 (proton donor; for dehydratase activity 1) is an active-site residue. In terms of domain architecture, Ketoreductase (KR) 1 spans 1443–1620; sequence GTVLVTGAAG…LSLAWGLWAE (178 aa). In terms of domain architecture, Carrier 1 spans 1722–1797; that stretch reads GAVLETVRAQ…SLAAHLLGRL (76 aa). The residue at position 1757 (serine 1757) is an O-(pantetheine 4'-phosphoryl)serine. Positions 1815 to 2231 constitute a Ketosynthase family 3 (KS3) 2 domain; that stretch reads DEPIAIIGMA…GTNAHVVLEQ (417 aa). Active-site for beta-ketoacyl synthase 2 activity residues include cysteine 1978, histidine 2113, and histidine 2153. Residues 2336-2656 enclose the Malonyl-CoA:ACP transacylase (MAT) 2 domain; it reads VFVFPGQGAQ…VAEAHTRGIA (321 aa). Residues 2704-2829 are N-terminal hotdog fold 2; the sequence is HPLLGARMEL…GLLSEEEPAT (126 aa). A PKS/mFAS DH 2 domain is found at 2704 to 2981; that stretch reads HPLLGARMEL…ARPVPAGQLR (278 aa). Histidine 2736 (proton acceptor; for dehydratase activity 2) is an active-site residue. A C-terminal hotdog fold 2 region spans residues 2842–2981; the sequence is AEPIELVGFY…ARPVPAGQLR (140 aa). Aspartate 2903 (proton donor; for dehydratase activity 2) is an active-site residue. In terms of domain architecture, Ketoreductase (KR) 2 spans 3182–3361; it reads GTVLITGASG…QSLAWGLWSE (180 aa). Residues 3462 to 3537 form the Carrier 2 domain; that stretch reads RQLTDLVRAQ…ALAGHLSTRL (76 aa). Serine 3497 is subject to O-(pantetheine 4'-phosphoryl)serine.

As to quaternary structure, the spectinabilin polyketide synthase complex is composed of 4 proteins, NorA, NorA', NorB and NorC. The complex comprises 6 modules with a total of 28 catalytic domains catalyzing 7 chain elongations. NorA comprises one module, NorA' two modules, NorB one module and NorC two modules. Pantetheine 4'-phosphate serves as cofactor.

It carries out the reaction 4-nitrobenzoyl-CoA + 6 (S)-methylmalonyl-CoA + malonyl-CoA + 6 NADPH + 12 H(+) = demethyldeoxyspectinabilin + 7 CO2 + 6 NADP(+) + 8 CoA + 5 H2O. The protein operates within antibiotic biosynthesis. It participates in polyketide biosynthesis. Functionally, component of a type I modular polyketide synthase (PKS) that generates the backbone of the antibiotic spectinabilin (also known as neoaureothin), a nitroaryl-substituted polyketide metabolite. This PKS system accepts the unusual starter unit 4-nitrobenzoyl-CoA and extends it by 6 molecules of (S)-methylmalonyl-CoA and a single molecule of malonyl-CoA. This Streptomyces orinoci (Streptoverticillium orinoci) protein is Spectinabilin polyketide synthase system protein NorA'.